A 91-amino-acid chain; its full sequence is Large ribosomal subunit protein bL28 (91 aa).

The protein belongs to the bacterial ribosomal protein bL28 family.

This Protochlamydia amoebophila (strain UWE25) protein is Large ribosomal subunit protein bL28.